Consider the following 339-residue polypeptide: Zinc metalloprotease MJ0392 (339 aa).

A run of 2 helical transmembrane segments spans residues 10–30 (IMGI…VIIG) and 33–53 (IMNN…SVVL). A Zn(2+)-binding site is contributed by His54. Residue Glu55 is part of the active site. His58 is a binding site for Zn(2+). 2 consecutive transmembrane segments (helical) span residues 96-116 (IAGP…SQFF) and 125-145 (LLYT…IPAF). Residue Asp148 coordinates Zn(2+). 2 helical membrane-spanning segments follow: residues 180-200 (IMLL…SLFV) and 251-271 (YFGY…IGNI). 2 consecutive CBS domains span residues 226 to 281 (MTPN…VRDY) and 281 to 335 (YMEK…ELKE).

It belongs to the peptidase M50B family. As to quaternary structure, monomer. It depends on Zn(2+) as a cofactor.

The protein resides in the cell membrane. Inhibited by 1,10-phenanthroline. In terms of biological role, a site-2 regulated intramembrane protease (S2P) that cleaves type-2 transmembrane proteins within their membrane-spanning domains; its endogenous substrate is unknown. Regulated intramembrane proteolysis (RIP) occurs when an extracytoplasmic signal triggers a concerted proteolytic cascade to transmit information and elicit cellular responses. A membrane-spanning regulatory substrate protein is first cut extracytoplasmically (site-1 protease, S1P), then within the membrane itself (site-2 protease, S2P, this enzyme), while cytoplasmic proteases finish degrading the regulatory protein, liberating the effector protein. Possible signals, S1P and substrates are unknown in this organism. The sequence is that of Zinc metalloprotease MJ0392 from Methanocaldococcus jannaschii (strain ATCC 43067 / DSM 2661 / JAL-1 / JCM 10045 / NBRC 100440) (Methanococcus jannaschii).